The following is a 195-amino-acid chain: MATDSALINLTHHFLIAMPGLEDEAFAKSVVYMCEHSDRGALGLVINKPSDINLKNLFDKVELPLRRDDLTEAPVFQGGPVQTERGFVLHESMMPGSESVYASTMTIPGGLEMTTSKDVLEALSTGAGPRKVFVSLGYSAWGEGQLESEISDNSWLTVPADVAVIFDTPVEQRYDKALMLLGLQSWMLSPDAGHA.

It belongs to the UPF0301 (AlgH) family.

The chain is UPF0301 protein Bpro_1142 from Polaromonas sp. (strain JS666 / ATCC BAA-500).